Here is a 446-residue protein sequence, read N- to C-terminus: MSFTPGKQSSSRASSGNRAGNGILKWADQSDQSSNFQTRGRRAQPKQTATSQPAGGNVVPYYSWFSGITQFQKGKEFQFAEGQGVPIAPGIPATEAKGYWYRHNRRSFKTADGNQRQLLPRWYFYYLGTGPHAKAQYGTNIDGVFWVANKQADVNTPADVVDRDPSSDEAIPTRFPPGTVLPQGYYIEGSGRSVPNSRSTSRASSRASSAGSRNRSNSGTRTPTSGVTSDMADQIASLVLAKLGKDATKPQQVTKQTAKEVRQKILNKPRQKRSPNKQCTVQQCFGKRGPNQNFGGAEMLKLGTSDPQFPILAELAPTAGAFFFGSRLELAKVQNLSGNFDEPQKDVYELRYNGAIRFDSTLPGFETIMKVLNENLNAYQQQDDGTNMSPKPQRQRGQQKGGENEDVSVAAPKSRVQQNKSRELTAEDISLVKQMDDPLTEDNSEM.

Residues 1 to 54 form a disordered region; it reads MSFTPGKQSSSRASSGNRAGNGILKWADQSDQSSNFQTRGRRAQPKQTATSQPA. Positions 9–22 are enriched in low complexity; the sequence is SSSRASSGNRAGNG. Polar residues-rich tracts occupy residues 29–38 and 45–54; these read QSDQSSNFQT and PKQTATSQPA. Positions 52-193 are RNA-binding; that stretch reads QPAGGNVVPY…GYYIEGSGRS (142 aa). In terms of domain architecture, CoV N NTD spans 60-189; the sequence is PYYSWFSGIT…VLPQGYYIEG (130 aa). Positions 105, 121, and 163 each coordinate RNA. Disordered regions lie at residues 157–230, 265–290, and 381–446; these read PADV…VTSD, ILNK…KRGP, and QQDD…NSEM. S166 carries the post-translational modification Phosphoserine; by host. T173 is subject to Phosphothreonine; by host. S190 is modified (phosphoserine; by host). Residues 195 to 226 show a composition bias toward low complexity; sequence PNSRSTSRASSRASSAGSRNRSNSGTRTPTSG. Positions 258–383 constitute a CoV N CTD domain; the sequence is AKEVRQKILN…ENLNAYQQQD (126 aa). Positions 265–275 are enriched in basic residues; sequence ILNKPRQKRSP. Residues 265 to 384 form a dimerization region; that stretch reads ILNKPRQKRS…NLNAYQQQDD (120 aa). Phosphoserine; by host is present on residues S389 and S421. Phosphothreonine; by host is present on T425.

This sequence belongs to the betacoronavirus nucleocapsid protein family. In terms of assembly, homooligomer. Both monomeric and oligomeric forms interact with RNA. Interacts with protein M. Interacts with NSP3; this interaction serves to tether the genome to the newly translated replicase-transcriptase complex at a very early stage of infection. Post-translationally, ADP-ribosylated. The ADP-ribosylation is retained in the virion during infection. In terms of processing, phosphorylated on serine and threonine residues.

Its subcellular location is the virion. The protein localises to the host endoplasmic reticulum-Golgi intermediate compartment. The protein resides in the host Golgi apparatus. Its function is as follows. Packages the positive strand viral genome RNA into a helical ribonucleocapsid (RNP) and plays a fundamental role during virion assembly through its interactions with the viral genome and membrane protein M. Plays an important role in enhancing the efficiency of subgenomic viral RNA transcription as well as viral replication. This Equine coronavirus (isolate NC99) (ECoV) protein is Nucleoprotein.